We begin with the raw amino-acid sequence, 188 residues long: Photosystem I assembly protein Ycf4 (188 aa).

Transmembrane regions (helical) follow at residues 26 to 46 and 70 to 90; these read YFWA…GLSS and LLFY…SLLW.

It belongs to the Ycf4 family.

The protein resides in the cellular thylakoid membrane. Its function is as follows. Seems to be required for the assembly of the photosystem I complex. This Microcystis aeruginosa (strain NIES-843 / IAM M-2473) protein is Photosystem I assembly protein Ycf4.